A 126-amino-acid polypeptide reads, in one-letter code: Fumarate reductase subunit C (126 aa).

3 helical membrane-spanning segments follow: residues 30-50 (IFVA…GAGG), 64-84 (VVVV…VTWF), and 105-125 (VLAG…WMVL).

Belongs to the FrdC family. As to quaternary structure, part of an enzyme complex containing four subunits: a flavoprotein (FrdA), an iron-sulfur protein (FrdB), and two hydrophobic anchor proteins (FrdC and FrdD).

It localises to the cell membrane. Functionally, anchors the catalytic components of the fumarate reductase complex to the cell membrane, binds quinones. The sequence is that of Fumarate reductase subunit C from Mycobacterium tuberculosis (strain ATCC 25177 / H37Ra).